An 847-amino-acid chain; its full sequence is Bifunctional lysine-specific demethylase and histidyl-hydroxylase NO66 (847 aa).

Positions 1-24 are enriched in polar residues; it reads MEKVTNSAAAKPQGNNKKQESAYN. 3 disordered regions span residues 1–45, 203–223, and 254–320; these read MEKV…SDLL, AEADAKNNDTKKAGQSAKESV, and AEKE…ERKQ. Residues 203-214 are compositionally biased toward basic and acidic residues; sequence AEADAKNNDTKK. Low complexity predominate over residues 268 to 278; sequence STSSKEAAAAK. Residues 279–288 are compositionally biased toward basic and acidic residues; the sequence is TADHERRLLA. Over residues 304–314 the composition is skewed to polar residues; the sequence is AMESVATQGAS. S323 carries the phosphoserine modification. T329 bears the Phosphothreonine mark. Residue S330 is modified to Phosphoserine. Residues 377 to 401 form a disordered region; sequence KAPEEGNNNNDEKEMSTETSETHKT. The span at 386 to 401 shows a compositional bias: basic and acidic residues; the sequence is NDEKEMSTETSETHKT. One can recognise a JmjC domain in the interval 499–644; it reads CSIRLLNPSA…NLLETLMPMV (146 aa). The Fe cation site is built by H545, D547, and H610.

It belongs to the ROX family. NO66 subfamily. It depends on Fe(2+) as a cofactor.

The protein resides in the nucleus. The enzyme catalyses N(6),N(6)-dimethyl-L-lysyl(36)-[histone H3] + 2 2-oxoglutarate + 2 O2 = L-lysyl(36)-[histone H3] + 2 formaldehyde + 2 succinate + 2 CO2. Its function is as follows. Oxygenase that can act as both a histone lysine demethylase and a ribosomal histidine hydroxylase. Specifically demethylates 'Lys-4' (H3K4me) and 'Lys-36' (H3K36me) of histone H3, thereby playing a central role in histone code. This Drosophila simulans (Fruit fly) protein is Bifunctional lysine-specific demethylase and histidyl-hydroxylase NO66.